Here is a 437-residue protein sequence, read N- to C-terminus: Glutamate-1-semialdehyde 2,1-aminomutase (437 aa).

At K273 the chain carries N6-(pyridoxal phosphate)lysine.

The protein belongs to the class-III pyridoxal-phosphate-dependent aminotransferase family. HemL subfamily. As to quaternary structure, homodimer. Pyridoxal 5'-phosphate is required as a cofactor.

The protein resides in the cytoplasm. The enzyme catalyses (S)-4-amino-5-oxopentanoate = 5-aminolevulinate. The protein operates within porphyrin-containing compound metabolism; protoporphyrin-IX biosynthesis; 5-aminolevulinate from L-glutamyl-tRNA(Glu): step 2/2. In Chlamydia felis (strain Fe/C-56) (Chlamydophila felis), this protein is Glutamate-1-semialdehyde 2,1-aminomutase.